The primary structure comprises 217 residues: Proteasome subunit beta type-9 (217 aa).

Positions 1–18 (MLGEEAEPQWISEEVKTG) are cleaved as a propeptide — removed in mature form. Thr19 functions as the Nucleophile in the catalytic mechanism.

It belongs to the peptidase T1B family. The 26S proteasome consists of a 20S proteasome core and two 19S regulatory subunits. The 20S proteasome core is composed of 28 subunits that are arranged in four stacked rings, resulting in a barrel-shaped structure. The two end rings are each formed by seven alpha subunits, and the two central rings are each formed by seven beta subunits. The catalytic chamber with the active sites is on the inside of the barrel. Component of the immunoproteasome, where it displaces the equivalent housekeeping subunit PSMB6. Post-translationally, autocleaved. The resulting N-terminal Thr residue of the mature subunit is responsible for the nucleophile proteolytic activity.

Its subcellular location is the cytoplasm. It is found in the nucleus. It carries out the reaction Cleavage of peptide bonds with very broad specificity.. Its function is as follows. The proteasome is a multicatalytic proteinase complex which is characterized by its ability to cleave peptides with Arg, Phe, Tyr, Leu, and Glu adjacent to the leaving group at neutral or slightly basic pH. The proteasome has an ATP-dependent proteolytic activity. This subunit is involved in antigen processing to generate class I binding peptides. The polypeptide is Proteasome subunit beta type-9 (psmb9) (Oryzias latipes (Japanese rice fish)).